The primary structure comprises 609 residues: Dihydroxy-acid dehydratase (609 aa).

Residue Asp-82 participates in Mg(2+) binding. A [2Fe-2S] cluster-binding site is contributed by Cys-123. The Mg(2+) site is built by Asp-124 and Lys-125. Residue Lys-125 is modified to N6-carboxylysine. Cys-192 lines the [2Fe-2S] cluster pocket. A Mg(2+)-binding site is contributed by Glu-489. The active-site Proton acceptor is Ser-515.

This sequence belongs to the IlvD/Edd family. In terms of assembly, homodimer. The cofactor is [2Fe-2S] cluster. It depends on Mg(2+) as a cofactor.

It carries out the reaction (2R)-2,3-dihydroxy-3-methylbutanoate = 3-methyl-2-oxobutanoate + H2O. The catalysed reaction is (2R,3R)-2,3-dihydroxy-3-methylpentanoate = (S)-3-methyl-2-oxopentanoate + H2O. Its pathway is amino-acid biosynthesis; L-isoleucine biosynthesis; L-isoleucine from 2-oxobutanoate: step 3/4. The protein operates within amino-acid biosynthesis; L-valine biosynthesis; L-valine from pyruvate: step 3/4. Functions in the biosynthesis of branched-chain amino acids. Catalyzes the dehydration of (2R,3R)-2,3-dihydroxy-3-methylpentanoate (2,3-dihydroxy-3-methylvalerate) into 2-oxo-3-methylpentanoate (2-oxo-3-methylvalerate) and of (2R)-2,3-dihydroxy-3-methylbutanoate (2,3-dihydroxyisovalerate) into 2-oxo-3-methylbutanoate (2-oxoisovalerate), the penultimate precursor to L-isoleucine and L-valine, respectively. This Azobacteroides pseudotrichonymphae genomovar. CFP2 protein is Dihydroxy-acid dehydratase.